The primary structure comprises 141 residues: Large ribosomal subunit protein uL11 (141 aa).

The protein belongs to the universal ribosomal protein uL11 family. As to quaternary structure, part of the ribosomal stalk of the 50S ribosomal subunit. Interacts with L10 and the large rRNA to form the base of the stalk. L10 forms an elongated spine to which L12 dimers bind in a sequential fashion forming a multimeric L10(L12)X complex. One or more lysine residues are methylated.

Functionally, forms part of the ribosomal stalk which helps the ribosome interact with GTP-bound translation factors. This is Large ribosomal subunit protein uL11 from Geobacillus kaustophilus (strain HTA426).